Consider the following 633-residue polypeptide: uncharacterized protein (633 aa).

This is an uncharacterized protein from Archaeoglobus fulgidus (strain ATCC 49558 / DSM 4304 / JCM 9628 / NBRC 100126 / VC-16).